Reading from the N-terminus, the 152-residue chain is UPF0266 membrane protein YobD (152 aa).

Transmembrane regions (helical) follow at residues Leu-6–Met-26, Ile-45–His-65, and Ala-67–Ile-87.

This sequence belongs to the UPF0266 family.

The protein localises to the cell inner membrane. This chain is UPF0266 membrane protein YobD, found in Escherichia fergusonii (strain ATCC 35469 / DSM 13698 / CCUG 18766 / IAM 14443 / JCM 21226 / LMG 7866 / NBRC 102419 / NCTC 12128 / CDC 0568-73).